The primary structure comprises 214 residues: Outer-membrane lipoprotein carrier protein (214 aa).

The N-terminal stretch at 1-24 is a signal peptide; sequence MKIKLAFAVLLALCLSLSVMPVLA.

It belongs to the LolA family. In terms of assembly, monomer.

The protein resides in the periplasm. Its function is as follows. Participates in the translocation of lipoproteins from the inner membrane to the outer membrane. Only forms a complex with a lipoprotein if the residue after the N-terminal Cys is not an aspartate (The Asp acts as a targeting signal to indicate that the lipoprotein should stay in the inner membrane). The polypeptide is Outer-membrane lipoprotein carrier protein (Alkalilimnicola ehrlichii (strain ATCC BAA-1101 / DSM 17681 / MLHE-1)).